Consider the following 86-residue polypeptide: Apolipoprotein C-I (86 aa).

An N-terminal signal peptide occupies residues 1–26; that stretch reads MRLFLSLPVLVVALLMILEGPGPAQG.

It belongs to the apolipoprotein C1 family.

It localises to the secreted. Functionally, inhibitor of lipoprotein binding to the low density lipoprotein (LDL) receptor, LDL receptor-related protein, and very low density lipoprotein (VLDL) receptor. Associates with high density lipoproteins (HDL) and the triacylglycerol-rich lipoproteins in the plasma and makes up about 10% of the protein of the VLDL and 2% of that of HDL. Appears to interfere directly with fatty acid uptake and is also the major plasma inhibitor of cholesteryl ester transfer protein (CETP). Binds free fatty acids and reduces their intracellular esterification. Modulates the interaction of APOE with beta-migrating VLDL and inhibits binding of beta-VLDL to the LDL receptor-related protein. This Aotus nancymaae (Ma's night monkey) protein is Apolipoprotein C-I (APOC1).